A 490-amino-acid polypeptide reads, in one-letter code: WD repeat-containing protein JIP5 (490 aa).

WD repeat units follow at residues 23–64 (KYND…ERMQ), 70–112 (QKKK…GSCR), 118–155 (PIESSVGKHLFTVGKDHVVKKANTETGKVLTKTDISKD), 157–196 (SSKDAVTKLCHSTTHPFLLSGTENGHVLVYDSNDLSNKFK), 242–284 (DQED…LMDQ), 286–327 (SRIK…HRVN), and 340–377 (GTADEVGFLDIDYEYRLLTAGMDSMKLWSAEGDDEEEE). The disordered stretch occupies residues 368 to 490 (SAEGDDEEEE…SHGIRRFDGL (123 aa)). Acidic residues-rich tracts occupy residues 370-406 (EGDDEEEEESEGEESEESEESDEESDESSGEESEGDD) and 413-437 (EESDSNDEDEVESSDDEKEKEEEST). Residues 438–448 (ETDHKNIEAES) are compositionally biased toward basic and acidic residues. Polar residues predominate over residues 450 to 461 (KQANKRQASQPK). Residues 469–484 (KQKLKQTSKLAHSHGI) are compositionally biased toward basic residues.

The protein belongs to the WD repeat WDR55 family.

Its subcellular location is the nucleus. The protein resides in the nucleolus. This Meyerozyma guilliermondii (strain ATCC 6260 / CBS 566 / DSM 6381 / JCM 1539 / NBRC 10279 / NRRL Y-324) (Yeast) protein is WD repeat-containing protein JIP5 (JIP5).